The primary structure comprises 245 residues: Ribonuclease 3 (245 aa).

In terms of domain architecture, RNase III spans 19-148 (FKLFQEKIGI…FIGALYLDQG (130 aa)). E61 is a Mg(2+) binding site. D65 is a catalytic residue. D134 and E137 together coordinate Mg(2+). The active site involves E137. The region spanning 174–243 (DYKSQLQELI…AAEALKKLKE (70 aa)) is the DRBM domain.

The protein belongs to the ribonuclease III family. Homodimer. It depends on Mg(2+) as a cofactor.

The protein localises to the cytoplasm. The enzyme catalyses Endonucleolytic cleavage to 5'-phosphomonoester.. Digests double-stranded RNA. Involved in the processing of primary rRNA transcript to yield the immediate precursors to the large and small rRNAs (23S and 16S). Processes some mRNAs, and tRNAs when they are encoded in the rRNA operon. Processes pre-crRNA and tracrRNA of type II CRISPR loci if present in the organism. This chain is Ribonuclease 3, found in Bacillus cereus (strain 03BB102).